The primary structure comprises 243 residues: 1-(5-phosphoribosyl)-5-[(5-phosphoribosylamino)methylideneamino] imidazole-4-carboxamide isomerase (243 aa).

D8 acts as the Proton acceptor in catalysis. D130 (proton donor) is an active-site residue.

Belongs to the HisA/HisF family.

It localises to the cytoplasm. It carries out the reaction 1-(5-phospho-beta-D-ribosyl)-5-[(5-phospho-beta-D-ribosylamino)methylideneamino]imidazole-4-carboxamide = 5-[(5-phospho-1-deoxy-D-ribulos-1-ylimino)methylamino]-1-(5-phospho-beta-D-ribosyl)imidazole-4-carboxamide. The protein operates within amino-acid biosynthesis; L-histidine biosynthesis; L-histidine from 5-phospho-alpha-D-ribose 1-diphosphate: step 4/9. This chain is 1-(5-phosphoribosyl)-5-[(5-phosphoribosylamino)methylideneamino] imidazole-4-carboxamide isomerase, found in Cellvibrio japonicus (strain Ueda107) (Pseudomonas fluorescens subsp. cellulosa).